The sequence spans 185 residues: Ribosome-recycling factor (185 aa).

The protein belongs to the RRF family.

It localises to the cytoplasm. Functionally, responsible for the release of ribosomes from messenger RNA at the termination of protein biosynthesis. May increase the efficiency of translation by recycling ribosomes from one round of translation to another. This Saccharopolyspora erythraea (strain ATCC 11635 / DSM 40517 / JCM 4748 / NBRC 13426 / NCIMB 8594 / NRRL 2338) protein is Ribosome-recycling factor.